A 377-amino-acid chain; its full sequence is Protein MULTIPOLAR SPINDLE 1 (377 aa).

The Nuclear localization signal motif lies at 117–124; that stretch reads LRRRFLRL.

Expressed in roots, stems, leaves, inflorescences and seedlings. Strongly expressed in meiocytes.

The protein localises to the nucleus. Its subcellular location is the cytoplasm. It localises to the cytoskeleton. The protein resides in the spindle. In terms of biological role, involved in meiotic spindle organization in meiocytes thus regulating chromosome segregation. Required for formation of meiotic DNA double-strand breaks (DSBs) during early recombination processes. This Arabidopsis thaliana (Mouse-ear cress) protein is Protein MULTIPOLAR SPINDLE 1.